The primary structure comprises 653 residues: 2-oxoglutarate oxidoreductase subunit KorA (653 aa).

The tract at residues 1-21 (MDPNGSGAGPESHDAAFHAAP) is disordered. Residues 11–21 (ESHDAAFHAAP) are compositionally biased toward basic and acidic residues.

As to quaternary structure, KG oxidoreductase (KOR) is composed of KorA and KorB subunits.

The enzyme catalyses 2 oxidized [2Fe-2S]-[ferredoxin] + 2-oxoglutarate + CoA = succinyl-CoA + 2 reduced [2Fe-2S]-[ferredoxin] + CO2 + H(+). Its pathway is carbohydrate metabolism; tricarboxylic acid cycle. Functionally, component of KG oxidoreductase (KOR) that catalyzes the CoA-dependent oxidative decarboxylation of 2-oxoglutarate (alpha-ketoglutarate, KG) to succinyl-CoA. Methyl viologen can act as electron acceptor in vitro; the physiologic electron acceptor is unknown. Is involved in the alternative TCA pathway that functions concurrently with fatty acid beta-oxidation. Since a growing body of evidence indicates that lipids (for example cholesterol and fatty acids) are a predominant growth substrate for M.tuberculosis during infection, flux through KOR likely represents an important step in intermediary metabolism in vivo. KOR-dependent decarboxylation of KG also appears to be an important source of CO(2) in M.tuberculosis metabolism. The chain is 2-oxoglutarate oxidoreductase subunit KorA (korA) from Mycobacterium tuberculosis (strain ATCC 25618 / H37Rv).